Here is a 417-residue protein sequence, read N- to C-terminus: Serine hydroxymethyltransferase (417 aa).

Residues leucine 121 and 125–127 each bind (6S)-5,6,7,8-tetrahydrofolate; that span reads GHL. Residue lysine 229 is modified to N6-(pyridoxal phosphate)lysine. (6S)-5,6,7,8-tetrahydrofolate is bound at residue 354-356; that stretch reads SPF.

This sequence belongs to the SHMT family. In terms of assembly, homodimer. Requires pyridoxal 5'-phosphate as cofactor.

It is found in the cytoplasm. It catalyses the reaction (6R)-5,10-methylene-5,6,7,8-tetrahydrofolate + glycine + H2O = (6S)-5,6,7,8-tetrahydrofolate + L-serine. The protein operates within one-carbon metabolism; tetrahydrofolate interconversion. It participates in amino-acid biosynthesis; glycine biosynthesis; glycine from L-serine: step 1/1. Catalyzes the reversible interconversion of serine and glycine with tetrahydrofolate (THF) serving as the one-carbon carrier. This reaction serves as the major source of one-carbon groups required for the biosynthesis of purines, thymidylate, methionine, and other important biomolecules. Also exhibits THF-independent aldolase activity toward beta-hydroxyamino acids, producing glycine and aldehydes, via a retro-aldol mechanism. This Dichelobacter nodosus (strain VCS1703A) protein is Serine hydroxymethyltransferase.